Consider the following 700-residue polypeptide: Endoglucanase A (700 aa).

The N-terminal stretch at 1-33 (MKTRQRKRLFVSAALAVSLTMTVPMPASVNAAA) is a signal peptide. Residue Glu213 is part of the active site. Residues 550–700 (NSDLVVQYKD…DGQLVWGIEP (151 aa)) enclose the CBM3 domain.

This sequence belongs to the glycosyl hydrolase 44 (cellulase J) family. Post-translationally, a short form (EG-A-S) arises from post-translational proteolysis of approximately 150 AA at the C-terminus of EG-A-L.

The enzyme catalyses Endohydrolysis of (1-&gt;4)-beta-D-glucosidic linkages in cellulose, lichenin and cereal beta-D-glucans.. This Paenibacillus lautus (Bacillus lautus) protein is Endoglucanase A (celA).